Consider the following 457-residue polypeptide: Multidrug resistance protein MdtK (457 aa).

The next 12 helical transmembrane spans lie at 11–31 (LLAL…MGFV), 53–73 (IWLP…PVIA), 93–113 (WLAG…GYII), 127–147 (AVGY…FQVA), 160–180 (GMVM…IFIY), 189–209 (GGVG…LAMV), 243–263 (LPIA…ALLV), 276–296 (IALN…AAVT), 314–334 (AART…IFTV), 350–370 (VVTL…SDSI), 387–407 (IFYI…YILA), and 418–438 (PAGF…MMML).

Belongs to the multi antimicrobial extrusion (MATE) (TC 2.A.66.1) family. MdtK subfamily.

It localises to the cell inner membrane. Multidrug efflux pump that functions probably as a Na(+)/drug antiporter. This Escherichia coli O45:K1 (strain S88 / ExPEC) protein is Multidrug resistance protein MdtK.